Consider the following 761-residue polypeptide: MENSFLSSKLVFLLAIALVLFLNTELSFLTAEGASDSNSKVYIVYLGQREHDDPELLTASHHQMLESLLQSKEDAHNSMIYSYQHGFSGFAALLTSSQAKKISEHPEVIHVIPNRILKLKTTRIWDHLGLSPIPTSFSSSSSAKAKGLLHNTSMGSEAIIGVVDSGIWPESKVFNDQGLGPIPKRWRGKCRSGEKFNATMHCNKKLIGAKYYQSGLLAMNGGKFNRIIIRDFKSNRDATGHGTHTATIAGGSFVPNASFYGLARGTVRGGAPRARIASYKACWNVVGWGGICSSADMWKAYDDAIHDQVDVLSVSIGASIPEDSERVDFIAAFHAVAKGITVVAAAGNDGSGAQTICNVAPWLLTVAATTLDRSFPTKITLGNNQTFFVSNLAESLFTGPEISTGLAFLDDDVDVKGKTILEFDSTHPSSIAGRGVVAVILAKKPDDRPAPDNSYIFTDYEIGTHILQYIRTTRSPTVRISAATTLTGQPATPKVAAFSSRGPNSVSPAILKPDIAAPGVSILAAVSPLDPGAFNGFKLHSGTSMSTPVVSGIIVLLKSLHPKWSPAAMRSALVTTAWRTSPSGEPIFAQGSNKKLADPFDYGGGLVNPEKAAKPGLVYDMGIKDYINYMCSAGYNDSSISRVLGKKTKCPIPKPSMLDINLPSITIPNLEKEVTLTRTVTNVGPIKSVYRAVIESPLGITLTVNPTILVFKSAAKRVLTFSVKAKTSHKVNSGYFFGSLTWTDGVHDVTIPVSVKTTISM.

The first 21 residues, 1–21, serve as a signal peptide directing secretion; the sequence is MENSFLSSKLVFLLAIALVLF. The propeptide at 22 to 120 is activation peptide; it reads LNTELSFLTA…VIPNRILKLK (99 aa). Residues 41-119 form the Inhibitor I9 domain; it reads VYIVYLGQRE…HVIPNRILKL (79 aa). The Peptidase S8 domain maps to 134-613; the sequence is PTSFSSSSSA…GGLVNPEKAA (480 aa). Residue Asn151 is glycosylated (N-linked (GlcNAc...) asparagine). Catalysis depends on Asp164, which acts as the Charge relay system. Asn197 is a glycosylation site (N-linked (GlcNAc...) asparagine). His241 serves as the catalytic Charge relay system. 2 N-linked (GlcNAc...) asparagine glycosylation sites follow: Asn256 and Asn384. Residue Ser544 is the Charge relay system of the active site. Asn636 carries an N-linked (GlcNAc...) asparagine glycan.

It belongs to the peptidase S8 family.

It is found in the secreted. This chain is Subtilisin-like protease SBT3.15, found in Arabidopsis thaliana (Mouse-ear cress).